The chain runs to 71 residues: Protein MTH_1184 (71 aa).

The protein is Protein MTH_1184 of Methanothermobacter thermautotrophicus (strain ATCC 29096 / DSM 1053 / JCM 10044 / NBRC 100330 / Delta H) (Methanobacterium thermoautotrophicum).